The following is a 502-amino-acid chain: ATP synthase subunit alpha (502 aa).

169 to 176 (GDKQTGKT) contacts ATP.

Belongs to the ATPase alpha/beta chains family. In terms of assembly, F-type ATPases have 2 components, CF(1) - the catalytic core - and CF(0) - the membrane proton channel. CF(1) has five subunits: alpha(3), beta(3), gamma(1), delta(1), epsilon(1). CF(0) has three main subunits: a(1), b(2) and c(9-12). The alpha and beta chains form an alternating ring which encloses part of the gamma chain. CF(1) is attached to CF(0) by a central stalk formed by the gamma and epsilon chains, while a peripheral stalk is formed by the delta and b chains.

Its subcellular location is the cell membrane. It catalyses the reaction ATP + H2O + 4 H(+)(in) = ADP + phosphate + 5 H(+)(out). Produces ATP from ADP in the presence of a proton gradient across the membrane. The alpha chain is a regulatory subunit. In Lachnoclostridium phytofermentans (strain ATCC 700394 / DSM 18823 / ISDg) (Clostridium phytofermentans), this protein is ATP synthase subunit alpha.